The following is a 227-amino-acid chain: Cytochrome c oxidase subunit 2 (227 aa).

Residues 1-14 lie on the Mitochondrial intermembrane side of the membrane; the sequence is MAYPFQLGLQDATS. Residues 15 to 45 traverse the membrane as a helical segment; the sequence is PIMEELTNFHDHTLMIVFLISSLVLYIISSM. Over 46 to 59 the chain is Mitochondrial matrix; that stretch reads LATKMTHTSTMDAQ. A helical membrane pass occupies residues 60 to 87; that stretch reads SMETIWTILPAVILVLIALPSLRILYMM. At 88 to 227 the chain is on the mitochondrial intermembrane side; that stretch reads DEINNPVLTV…FFENWSASMI (140 aa). Cu cation is bound by residues histidine 161, cysteine 196, glutamate 198, cysteine 200, histidine 204, and methionine 207. Glutamate 198 is a Mg(2+) binding site.

This sequence belongs to the cytochrome c oxidase subunit 2 family. In terms of assembly, component of the cytochrome c oxidase (complex IV, CIV), a multisubunit enzyme composed of 14 subunits. The complex is composed of a catalytic core of 3 subunits MT-CO1, MT-CO2 and MT-CO3, encoded in the mitochondrial DNA, and 11 supernumerary subunits COX4I, COX5A, COX5B, COX6A, COX6B, COX6C, COX7A, COX7B, COX7C, COX8 and NDUFA4, which are encoded in the nuclear genome. The complex exists as a monomer or a dimer and forms supercomplexes (SCs) in the inner mitochondrial membrane with NADH-ubiquinone oxidoreductase (complex I, CI) and ubiquinol-cytochrome c oxidoreductase (cytochrome b-c1 complex, complex III, CIII), resulting in different assemblies (supercomplex SCI(1)III(2)IV(1) and megacomplex MCI(2)III(2)IV(2)). Found in a complex with TMEM177, COA6, COX18, COX20, SCO1 and SCO2. Interacts with TMEM177 in a COX20-dependent manner. Interacts with COX20. Interacts with COX16. Requires Cu cation as cofactor.

The protein resides in the mitochondrion inner membrane. The enzyme catalyses 4 Fe(II)-[cytochrome c] + O2 + 8 H(+)(in) = 4 Fe(III)-[cytochrome c] + 2 H2O + 4 H(+)(out). Its function is as follows. Component of the cytochrome c oxidase, the last enzyme in the mitochondrial electron transport chain which drives oxidative phosphorylation. The respiratory chain contains 3 multisubunit complexes succinate dehydrogenase (complex II, CII), ubiquinol-cytochrome c oxidoreductase (cytochrome b-c1 complex, complex III, CIII) and cytochrome c oxidase (complex IV, CIV), that cooperate to transfer electrons derived from NADH and succinate to molecular oxygen, creating an electrochemical gradient over the inner membrane that drives transmembrane transport and the ATP synthase. Cytochrome c oxidase is the component of the respiratory chain that catalyzes the reduction of oxygen to water. Electrons originating from reduced cytochrome c in the intermembrane space (IMS) are transferred via the dinuclear copper A center (CU(A)) of subunit 2 and heme A of subunit 1 to the active site in subunit 1, a binuclear center (BNC) formed by heme A3 and copper B (CU(B)). The BNC reduces molecular oxygen to 2 water molecules using 4 electrons from cytochrome c in the IMS and 4 protons from the mitochondrial matrix. The protein is Cytochrome c oxidase subunit 2 (MT-CO2) of Acomys wilsoni (Wilson's spiny mouse).